The sequence spans 86 residues: Small ribosomal subunit protein bS16 (86 aa).

The protein belongs to the bacterial ribosomal protein bS16 family.

This is Small ribosomal subunit protein bS16 from Xylella fastidiosa (strain M12).